A 467-amino-acid chain; its full sequence is SVGFKAGVKDYKLTYYTPDYETKDTDILAAFRVTPQPGVPPEEAGAAVAAESSTGTWTTVWTDGLTSLDRYKGRCYHIEPVAGEEEQYIAYVAYPLDLFEEGSVTNMFTSIVGNVFGFKALRALRLEDLRIPIAYVKTFQGPPHGIQVERDKLNKYGRPLLGCTIKPKLGLSAKNYGRAVYECLRGGLDFTKDDENVNSQPFMRWRDRFVFCAEALYKAQAETGEIKGHYLNATAGTCEEMMKRAVFARELGVPIVMHDYLTGGFTANTTLAHYCRDNGLLLHIHRAMHAVIDRQKNHGMHFRVLAKALRMSGGDHIHAGTVVGKLEGERDITLGFVDLLRDDFIEKDRSRGIYFTQDWVSMPGVLPVASGGIHVWHMPALTEIFGDDSVLQFGGGTLGHPWGNAPGAVANRVALEACVQARNEGRDLAREGNEIIREACKWSPELAAACEVWKEIKFEFKAVDTLD.

At K5 the chain carries N6,N6,N6-trimethyllysine. The substrate site is built by N114 and T164. The active-site Proton acceptor is K166. Residue K168 participates in substrate binding. K192, D194, and E195 together coordinate Mg(2+). An N6-carboxylysine modification is found at K192. H285 (proton acceptor) is an active-site residue. Substrate-binding residues include R286, H318, and S370.

Belongs to the RuBisCO large chain family. Type I subfamily. As to quaternary structure, heterohexadecamer of 8 large chains and 8 small chains; disulfide-linked. The disulfide link is formed within the large subunit homodimers. Mg(2+) serves as cofactor. In terms of processing, the disulfide bond which can form in the large chain dimeric partners within the hexadecamer appears to be associated with oxidative stress and protein turnover.

The protein resides in the plastid. Its subcellular location is the chloroplast. The enzyme catalyses 2 (2R)-3-phosphoglycerate + 2 H(+) = D-ribulose 1,5-bisphosphate + CO2 + H2O. It carries out the reaction D-ribulose 1,5-bisphosphate + O2 = 2-phosphoglycolate + (2R)-3-phosphoglycerate + 2 H(+). Functionally, ruBisCO catalyzes two reactions: the carboxylation of D-ribulose 1,5-bisphosphate, the primary event in carbon dioxide fixation, as well as the oxidative fragmentation of the pentose substrate in the photorespiration process. Both reactions occur simultaneously and in competition at the same active site. The protein is Ribulose bisphosphate carboxylase large chain of Tasmannia insipida (Pepperbush).